Consider the following 306-residue polypeptide: Acetyl-coenzyme A carboxylase carboxyl transferase subunit beta (306 aa).

A CoA carboxyltransferase N-terminal domain is found at 25-294 (VWTKCDSCGQ…PSPDAPREAV (270 aa)). Positions 29, 32, 48, and 51 each coordinate Zn(2+). A C4-type zinc finger spans residues 29–51 (CDSCGQVLYRAELERNLEVCPKC). The disordered stretch occupies residues 286–306 (SPDAPREAVVVPPVPDQDHEA).

The protein belongs to the AccD/PCCB family. Acetyl-CoA carboxylase is a heterohexamer composed of biotin carboxyl carrier protein (AccB), biotin carboxylase (AccC) and two subunits each of ACCase subunit alpha (AccA) and ACCase subunit beta (AccD). The cofactor is Zn(2+).

Its subcellular location is the cytoplasm. The catalysed reaction is N(6)-carboxybiotinyl-L-lysyl-[protein] + acetyl-CoA = N(6)-biotinyl-L-lysyl-[protein] + malonyl-CoA. Its pathway is lipid metabolism; malonyl-CoA biosynthesis; malonyl-CoA from acetyl-CoA: step 1/1. In terms of biological role, component of the acetyl coenzyme A carboxylase (ACC) complex. Biotin carboxylase (BC) catalyzes the carboxylation of biotin on its carrier protein (BCCP) and then the CO(2) group is transferred by the transcarboxylase to acetyl-CoA to form malonyl-CoA. This Cronobacter sakazakii (strain ATCC BAA-894) (Enterobacter sakazakii) protein is Acetyl-coenzyme A carboxylase carboxyl transferase subunit beta.